A 205-amino-acid chain; its full sequence is Small ribosomal subunit protein uS4 (205 aa).

In terms of domain architecture, S4 RNA-binding spans 94–157; it reads SRLDTVVYRM…QQIPLIQESI (64 aa).

It belongs to the universal ribosomal protein uS4 family. Part of the 30S ribosomal subunit. Contacts protein S5. The interaction surface between S4 and S5 is involved in control of translational fidelity.

In terms of biological role, one of the primary rRNA binding proteins, it binds directly to 16S rRNA where it nucleates assembly of the body of the 30S subunit. Its function is as follows. With S5 and S12 plays an important role in translational accuracy. This chain is Small ribosomal subunit protein uS4, found in Rickettsia prowazekii (strain Madrid E).